The chain runs to 701 residues: Kinesin-like protein KIN-10C (701 aa).

In terms of domain architecture, Kinesin motor spans 8-318; it reads VVRVVARVKP…LNLASRICLG (311 aa). 94-101 contacts ATP; the sequence is GARNSGKT.

Belongs to the TRAFAC class myosin-kinesin ATPase superfamily. Kinesin family. KIN-10 subfamily.

The polypeptide is Kinesin-like protein KIN-10C (Arabidopsis thaliana (Mouse-ear cress)).